The chain runs to 25 residues: Chitinolytic alpha-amylase inhibitor PvCAI (25 aa).

Homodimer.

It catalyses the reaction Random endo-hydrolysis of N-acetyl-beta-D-glucosaminide (1-&gt;4)-beta-linkages in chitin and chitodextrins.. Its function is as follows. Alpha-amylase inhibitor, active against Z.subfasciatus alpha-amylase (ZSA) but not porcine pancreatic alpha-amylase (PPA). Has chitinase activity. The sequence is that of Chitinolytic alpha-amylase inhibitor PvCAI from Phaseolus vulgaris (Kidney bean).